The sequence spans 257 residues: UPF0246 protein Sama_0917 (257 aa).

Belongs to the UPF0246 family.

The sequence is that of UPF0246 protein Sama_0917 from Shewanella amazonensis (strain ATCC BAA-1098 / SB2B).